The following is a 158-amino-acid chain: Ribosome-binding factor A (158 aa).

The interval 130 to 158 (TAQYAGDADPYKHDDEAEAEGDEFESDEE) is disordered. The segment covering 145–158 (EAEAEGDEFESDEE) has biased composition (acidic residues).

It belongs to the RbfA family. In terms of assembly, monomer. Binds 30S ribosomal subunits, but not 50S ribosomal subunits or 70S ribosomes.

It localises to the cytoplasm. In terms of biological role, one of several proteins that assist in the late maturation steps of the functional core of the 30S ribosomal subunit. Associates with free 30S ribosomal subunits (but not with 30S subunits that are part of 70S ribosomes or polysomes). Required for efficient processing of 16S rRNA. May interact with the 5'-terminal helix region of 16S rRNA. This Bifidobacterium longum subsp. infantis (strain ATCC 15697 / DSM 20088 / JCM 1222 / NCTC 11817 / S12) protein is Ribosome-binding factor A.